The sequence spans 186 residues: Single-stranded DNA-binding protein 1 (186 aa).

Positions 1–108 (MDATVTVVGN…LEIDEIGPTL (108 aa)) constitute an SSB domain. The tract at residues 120–186 (QAGHGVSPDP…EDFDSDEVPF (67 aa)) is disordered. Over residues 132 to 141 (DSQTGQGIDS) the composition is skewed to polar residues. Over residues 175–186 (SYEDFDSDEVPF) the composition is skewed to acidic residues.

Homotetramer.

The polypeptide is Single-stranded DNA-binding protein 1 (ssb1) (Tropheryma whipplei (strain TW08/27) (Whipple's bacillus)).